A 116-amino-acid chain; its full sequence is Large ribosomal subunit protein bL17 (116 aa).

The protein belongs to the bacterial ribosomal protein bL17 family. As to quaternary structure, part of the 50S ribosomal subunit. Contacts protein L32.

The sequence is that of Large ribosomal subunit protein bL17 from Microcystis aeruginosa (strain NIES-843 / IAM M-2473).